We begin with the raw amino-acid sequence, 344 residues long: Selenide, water dikinase (344 aa).

Residue C16 is part of the active site. Residues K19 and S47–D49 contribute to the ATP site. Position 50 (D50) interacts with Mg(2+). ATP-binding positions include D67, D90, and G138–S140. Residue D90 participates in Mg(2+) binding. Mg(2+) is bound at residue D226.

The protein belongs to the selenophosphate synthase 1 family. Class I subfamily. In terms of assembly, homodimer. It depends on Mg(2+) as a cofactor.

The catalysed reaction is hydrogenselenide + ATP + H2O = selenophosphate + AMP + phosphate + 2 H(+). Its function is as follows. Synthesizes selenophosphate from selenide and ATP. The protein is Selenide, water dikinase of Pseudomonas aeruginosa (strain ATCC 15692 / DSM 22644 / CIP 104116 / JCM 14847 / LMG 12228 / 1C / PRS 101 / PAO1).